Reading from the N-terminus, the 366-residue chain is Probable glucuronokinase 2 (366 aa).

An ATP-binding site is contributed by 126-136 (PRQTGLSGSSA). D179 acts as the Proton acceptor in catalysis.

The protein belongs to the GHMP kinase family. Mg(2+) serves as cofactor. Requires Mn(2+) as cofactor. It depends on Co(2+) as a cofactor.

The enzyme catalyses D-glucuronate + ATP = 1-phospho-alpha-D-glucuronate + ADP + H(+). Sugar-1-kinase with a strict substrate specificity for D-glucuronic acid and ATP. Involved in the biosynthesis of UDP-glucuronic acid (UDP-GlcA), providing nucleotide sugars for cell-wall polymers. May be also involved in a salvage pathway for glucuronic acid. This chain is Probable glucuronokinase 2 (GLCAK2), found in Arabidopsis thaliana (Mouse-ear cress).